Consider the following 1308-residue polypeptide: D-lysergyl-peptide-synthetase subunit 2 (1308 aa).

The segment at 261-658 (EWCRRTPSAV…CRKSTQVKLR (398 aa)) is adenylation (A) domain. One can recognise a Carrier domain in the interval 803–871 (IEEAFQRFFA…ELSELARHTK (69 aa)). Ser-835 carries the post-translational modification O-(pantetheine 4'-phosphoryl)serine. Residues 910–1299 (EDVYPCTPLQ…HAAPRTLIGD (390 aa)) are condensation (C) domain.

Belongs to the NRP synthetase family.

It participates in alkaloid biosynthesis; ergot alkaloid biosynthesis. Functionally, D-lysergyl-peptide-synthetase subunit 2; part of the gene cluster that mediates the biosynthesis of fungal ergot alkaloid. DmaW catalyzes the first step of ergot alkaloid biosynthesis by condensing dimethylallyl diphosphate (DMAP) and tryptophan to form 4-dimethylallyl-L-tryptophan. The second step is catalyzed by the methyltransferase easF that methylates 4-dimethylallyl-L-tryptophan in the presence of S-adenosyl-L-methionine, resulting in the formation of 4-dimethylallyl-L-abrine. The catalase easC and the FAD-dependent oxidoreductase easE then transform 4-dimethylallyl-L-abrine to chanoclavine-I which is further oxidized by EasD in the presence of NAD(+), resulting in the formation of chanoclavine-I aldehyde. Agroclavine dehydrogenase easG then mediates the conversion of chanoclavine-I aldehyde to agroclavine via a non-enzymatic adduct reaction: the substrate is an iminium intermediate that is formed spontaneously from chanoclavine-I aldehyde in the presence of glutathione. The presence of easA is not required to complete this reaction. Further conversion of agroclavine to paspalic acid is a two-step process involving oxidation of agroclavine to elymoclavine and of elymoclavine to paspalic acid, the second step being performed by the elymoclavine oxidase cloA. Paspalic acid is then further converted to D-lysergic acid. Ergopeptines are assembled from D-lysergic acid and three different amino acids by the D-lysergyl-peptide-synthetases composed each of a monomudular and a trimodular nonribosomal peptide synthetase subunit. LpsB and lpsC encode the monomodular subunits responsible for D-lysergic acid activation and incorporation into the ergopeptine backbone. LpsA1 and A2 subunits encode the trimodular nonribosomal peptide synthetase assembling the tripeptide portion of ergopeptines. LpsA1 is responsible for formation of the major ergopeptine, ergotamine, and lpsA2 for alpha-ergocryptine, the minor ergopeptine of the total alkaloid mixture elaborated by C.purpurea. D-lysergyl-tripeptides are assembled by the nonribosomal peptide synthetases and released as N-(D-lysergyl-aminoacyl)-lactams. Cyclolization of the D-lysergyl-tripeptides is performed by the Fe(2+)/2-ketoglutarate-dependent dioxygenase easH which introduces a hydroxyl group into N-(D-lysergyl-aminoacyl)-lactam at alpha-C of the aminoacyl residue followed by spontaneous condensation with the terminal lactam carbonyl group. The sequence is that of D-lysergyl-peptide-synthetase subunit 2 from Claviceps purpurea (Ergot fungus).